Consider the following 118-residue polypeptide: Hydrogenase maturation factor HypA (118 aa).

H2 serves as a coordination point for Ni(2+). Zn(2+) contacts are provided by C73, C76, C93, and C96.

This sequence belongs to the HypA/HybF family.

Involved in the maturation of [NiFe] hydrogenases. Required for nickel insertion into the metal center of the hydrogenase. The sequence is that of Hydrogenase maturation factor HypA from Lawsonia intracellularis (strain PHE/MN1-00).